Consider the following 1352-residue polypeptide: MAAAGARRSPGRGLGLRGRPRLGFHPGPPPPPPPPLLLLFLLLLPPPPLLAGATAAAASREPDSPCRLKTVTVSTLPALRESDIGWSGARTGAAAGAGAGTGAGAGAAAAAASAASPGSAGSAGTAAESRLLLFVRNELPGRIAVQDDLDNTELPFFTLEMSGTAADISLVHWRQQWLENGTLYFHVSMSSSGQLAQATAPTLQEPSEIVEEQMHILHISVMGGLIALLLLLLVFTVALYAQRRWQKRRRIPQKSASTEATHEIHYIPSVLLGPQARESFRSSRLQTHNSVIGVPIRETPILDDYDYEEEEEPPRRANHVSREDEFGSQMTHALDSLGRPGEEKVEFEKKAAAEATQETVESLMQKFKESFRANTPVEIGQLQPASRSSTSAGKRKRRNKSRGGISFGRTKGTSGSEADDETQLTFYTEQYRSRRRSKGLLKSPVNKTALTLIAVSSCILAMVCGNQMSCPLTVKVTLHVPEHFIADGSSFVVSEGSYLDISDWLNPAKLSLYYQINATSPWVRDLCGQRTTDACEQLCDPDTGECSCHEGYAPDPVHRHLCVRSDWGQSEGPWPYTTLERGYDLVTGEQAPEKILRSTFSLGQGLWLPVSKSFVVPPVELSINPLASCKTDVLVTEDPADVREEAMLSTYFETINDLLSSFGPVRDCSRNNGGCTRNFKCVSDRQVDSSGCVCPEELKPMKDGSGCYDHSKGIDCSDGFNGGCEQLCLQQTLPLPYDTTSSTIFMFCGCVEEYKLAPDGKSCLMLSDVCEGPKCLKPDSKFNDTLFGEMLHGYNNRTQHVNQGQVFQMTFRENNFIKDFPQLADGLLVIPLPVEEQCRGVLSEPLPDLQLLTGDIRYDEAMGYPMVQQWRVRSNLYRVKLSTITLSAGFTNVLKILTKESSRDELLSFIQHYGSHYIAEALYGSELTCIIHFPSKKVQQQLWLQYQKETTELGSKKELKSMPFITYLSGLLTAQMLSDDQLISGVEIRCEEKGRCPSTCHLCRRPGKEQLSPTPVLLEINRVVPLYTLIQDNGTKEAFKNALMSSYWCSGKGDVIDDWCRCDLSAFDASGLPNCSPLPQPVLRLSPTVEPSSTVVSLEWVDVQPAIGTKVSDYILQHKKVDEYTDTDLYTGEFLSFADDLLSGLGTSCVAAGRSHGEVPEVSIYSVIFKCLEPDGLYKFTLYAVDTRGRHSELSTVTLRTACPLVDDNKAEEIADKIYNLYNGYTSGKEQQTAYNTLMEVSASMLFRVQHHYNSHYEKFGDFVWRSEDELGPRKAHLILRRLERVSSHCSSLLRSAYIQSRVDTIPYLFCRSEEVRPAGMVWYSILKDTKITCEEKMVSMARNTYGETKGR.

The segment at Met-1 to Pro-31 is disordered. A signal peptide spans Met-1–Ala-51. Topologically, residues Gly-52–His-218 are lumenal. A glycan (N-linked (GlcNAc...) asparagine) is linked at Asn-180. The helical transmembrane segment at Ile-219 to Leu-239 threads the bilayer. Over Tyr-240–Lys-447 the chain is Cytoplasmic. 2 disordered regions span residues Glu-308–Gly-327 and Thr-375–Glu-421. A compositionally biased stretch (polar residues) spans Gln-383–Ala-392. Residues Thr-448–Met-468 form a helical membrane-spanning segment. The Lumenal portion of the chain corresponds to Ser-469–Arg-1352. 3 EGF-like domains span residues Val-523 to Val-563, Pro-664 to Tyr-708, and Lys-712 to Leu-764. 9 disulfides stabilise this stretch: Cys-527–Cys-539, Cys-535–Cys-546, Cys-548–Cys-562, Cys-668–Cys-681, Cys-675–Cys-692, Cys-694–Cys-707, Cys-716–Cys-728, Cys-724–Cys-748, and Cys-750–Cys-763. N-linked (GlcNAc...) asparagine glycosylation is present at Asn-796. 3 disulfide bridges follow: Cys-838/Cys-1000, Cys-929/Cys-990, and Cys-996/Cys-1003. N-linked (GlcNAc...) asparagine glycosylation is present at Asn-1033. Intrachain disulfides connect Cys-1049–Cys-1060, Cys-1062–Cys-1075, Cys-1149–Cys-1171, Cys-1203–Cys-1290, and Cys-1311–Cys-1334. The region spanning Pro-1079 to Thr-1201 is the Fibronectin type-III domain.

The protein belongs to the astrotactin family. In terms of assembly, interacts with ASTN1; the interaction is not calcium-dependent. In terms of tissue distribution, detected in cerebellum granule neurons; not detected in astroglia (at protein level). Detected primarily in cerebellum, and at lower levels in brain cortex, olfactory bulb, hindbrain and hippocampus dentate gyrus. Between 6 and 10 days after birth, when granule cell migration occurs in the cerebellum, detected in granule cell precursors in the external germinal layer, the molecular layer, the internal granule layer and in Purkinje neurons. Detected in postmitotic neurons in adult cerebellum.

The protein localises to the membrane. It is found in the perikaryon. The protein resides in the cytoplasm. Its subcellular location is the cell cortex. It localises to the early endosome. The protein localises to the late endosome. It is found in the cytoplasmic vesicle. The protein resides in the clathrin-coated vesicle. Functionally, mediates recycling of the neuronal cell adhesion molecule ASTN1 to the anterior pole of the cell membrane in migrating neurons. Promotes ASTN1 internalization and intracellular transport of endocytosed ASTN1. Selectively binds inositol-4,5-bisphosphate, inositol-3,4,5-trisphosphate and inositol-1,3,4,5-tetrakisphosphate, suggesting it is recruited to membranes that contain lipids with a phosphoinositide headgroup. This Mus musculus (Mouse) protein is Astrotactin-2 (Astn2).